Consider the following 299-residue polypeptide: MINSIRIGTRNSTLALIQTNLVIEQIKQIFPDINCEIVPIITSGDLIQNKPLYDIGGKALFLKEIEQALLDKKIDLAVHSLKDIPGKIPVELVIAAVLEREDPRDVLVCLNYQSIETLPQNAVIGSSAVRRKAFIKKIRPDLNIKVFRGNVDSRIKKLMTGEVDAIILSYAGLKRLNVFNQKYCHLIEYSKMLPCIGQGVIAVEIRKDDNAMFNICSQINHLPTFELIKPERAFLEYLDANCSTPIAAYAQYLDAYNIQIDFMLGNLDCTKIIFQTEITNIKTSKICGIKAAKMMLAQQ.

Cys242 is subject to S-(dipyrrolylmethanemethyl)cysteine.

The protein belongs to the HMBS family. As to quaternary structure, monomer. It depends on dipyrromethane as a cofactor.

The catalysed reaction is 4 porphobilinogen + H2O = hydroxymethylbilane + 4 NH4(+). It functions in the pathway porphyrin-containing compound metabolism; protoporphyrin-IX biosynthesis; coproporphyrinogen-III from 5-aminolevulinate: step 2/4. Its function is as follows. Tetrapolymerization of the monopyrrole PBG into the hydroxymethylbilane pre-uroporphyrinogen in several discrete steps. The chain is Porphobilinogen deaminase (hemC) from Rickettsia prowazekii (strain Madrid E).